Here is a 297-residue protein sequence, read N- to C-terminus: Mitochondrial glycine transporter (297 aa).

3 Solcar repeats span residues 5 to 81 (TGHL…MRTA), 105 to 189 (LSMY…LKHT), and 211 to 295 (TSTA…LIKH). A run of 6 helical transmembrane segments spans residues 8–33 (LIGG…TRFQ), 56–82 (GTLP…RTAL), 111–136 (LVTG…VRYE), 164–187 (GFGP…EKLK), 215–241 (INST…KTRM), and 270–288 (GLSM…AWGI).

Belongs to the mitochondrial carrier (TC 2.A.29) family. SLC25A38 subfamily.

It localises to the mitochondrion inner membrane. The enzyme catalyses glycine(in) = glycine(out). Its function is as follows. Mitochondrial glycine transporter that imports glycine into the mitochondrial matrix. Plays an important role in providing glycine for the first enzymatic step in heme biosynthesis, the condensation of glycine with succinyl-CoA to produce 5-aminolevulinate (ALA) in the mitochondrial matrix. In Candida glabrata (strain ATCC 2001 / BCRC 20586 / JCM 3761 / NBRC 0622 / NRRL Y-65 / CBS 138) (Yeast), this protein is Mitochondrial glycine transporter.